The chain runs to 118 residues: Ribosome-binding factor A (118 aa).

Belongs to the RbfA family. Monomer. Binds 30S ribosomal subunits, but not 50S ribosomal subunits or 70S ribosomes.

It localises to the cytoplasm. Its function is as follows. One of several proteins that assist in the late maturation steps of the functional core of the 30S ribosomal subunit. Associates with free 30S ribosomal subunits (but not with 30S subunits that are part of 70S ribosomes or polysomes). Required for efficient processing of 16S rRNA. May interact with the 5'-terminal helix region of 16S rRNA. The polypeptide is Ribosome-binding factor A (Bacillus cereus (strain ATCC 10987 / NRS 248)).